A 482-amino-acid chain; its full sequence is Probable metalloreductase AIM14 (482 aa).

7 helical membrane passes run 16 to 36, 50 to 70, 87 to 106, 123 to 143, 155 to 175, 182 to 202, and 205 to 225; these read VKYG…VATV, SLPW…LGVW, GRMA…KYWP, IIVV…FVEG, LLGV…VALF, LFYV…LFHA, and PVTL…FIKF. Positions 86–198 constitute a Ferric oxidoreductase domain; the sequence is FGRMAYCLLP…ITIGMFVVLI (113 aa). Positions 225-348 constitute an FAD-binding FR-type domain; sequence FQTYSATPVS…GGSGISLAIP (124 aa).

The protein belongs to the ferric reductase (FRE) family. AIM14 subfamily.

It is found in the membrane. Functionally, probable cell surface metalloreductase. May be involved in iron or copper homeostasis. This is Probable metalloreductase AIM14 (AIM14) from Meyerozyma guilliermondii (strain ATCC 6260 / CBS 566 / DSM 6381 / JCM 1539 / NBRC 10279 / NRRL Y-324) (Yeast).